We begin with the raw amino-acid sequence, 466 residues long: Asparagine--tRNA ligase (466 aa).

The protein belongs to the class-II aminoacyl-tRNA synthetase family. In terms of assembly, homodimer.

It is found in the cytoplasm. The catalysed reaction is tRNA(Asn) + L-asparagine + ATP = L-asparaginyl-tRNA(Asn) + AMP + diphosphate + H(+). This Pectobacterium atrosepticum (strain SCRI 1043 / ATCC BAA-672) (Erwinia carotovora subsp. atroseptica) protein is Asparagine--tRNA ligase.